We begin with the raw amino-acid sequence, 826 residues long: E3 ubiquitin-protein ligase SH3RF1 (826 aa).

The segment at 12–53 (CPVCLERLDASAKVLPCQHTFCKRCLLGIVSSRKELRCPECR) adopts an RING-type zinc-finger fold. Residues 80-130 (PRKAGDGGSAGNSTNALRAQGSVTTNGGLNDAQNTQSGQQRIQARSPPVRG) are disordered. Residues 90–122 (GNSTNALRAQGSVTTNGGLNDAQNTQSGQQRIQ) show a composition bias toward polar residues. 2 consecutive SH3 domains span residues 132–191 (PQLP…IIKP) and 194–257 (QPPP…FNSA). A disordered region spans residues 266–319 (KPSGADTGEGSSGTSHSGNSQKQADAKKNTKKRHSFTSLTMSNKSSQSVQNRHS). The segment covering 273-285 (GEGSSGTSHSGNS) has biased composition (low complexity). The span at 301-317 (FTSLTMSNKSSQSVQNR) shows a compositional bias: polar residues. In terms of domain architecture, SH3 3 spans 398–459 (ARPSVFIAIY…PGNYVAPVTR (62 aa)). Disordered regions lie at residues 647-694 (NSAA…QTNS) and 725-759 (DSVSASTPAQDNRKPASLDNNIPIAPPPRQPCSSL). The segment covering 652 to 663 (KQDKDSKKEKKG) has biased composition (basic and acidic residues). Positions 767-826 (RPCERYRVMVSYPPQSEAELELKEGDIVFVHKKREDGWFKGTLQRNGKTGLFPGSFVENI) constitute an SH3 4 domain.

It belongs to the SH3RF family. Post-translationally, autoubiquitinated. Ubiquitinated by SH3RF2, leading to proteasome-mediated degradation.

The protein localises to the cytoplasm. The protein resides in the perinuclear region. It localises to the cell projection. Its subcellular location is the lamellipodium. It is found in the golgi apparatus. The protein localises to the trans-Golgi network. The catalysed reaction is S-ubiquitinyl-[E2 ubiquitin-conjugating enzyme]-L-cysteine + [acceptor protein]-L-lysine = [E2 ubiquitin-conjugating enzyme]-L-cysteine + N(6)-ubiquitinyl-[acceptor protein]-L-lysine.. It functions in the pathway protein modification; protein ubiquitination. Has E3 ubiquitin-protein ligase activity. In the absence of an external substrate, it can catalyze self-ubiquitination. Acts as a scaffold protein that contributes to the effective activation of the JNK signaling pathway. Plays an essential role in the anterior neural development. This Xenopus laevis (African clawed frog) protein is E3 ubiquitin-protein ligase SH3RF1 (sh3rf1).